The primary structure comprises 114 residues: Helper of Tim protein 13 (114 aa).

The segment at 10 to 90 (LVDKESRCEH…DSLQCPNCRS (81 aa)) adopts a CHY-type; degenerate zinc-finger fold. Zn(2+) is bound by residues cysteine 17, histidine 19, cysteine 40, cysteine 43, cysteine 67, cysteine 70, cysteine 85, and cysteine 88.

In terms of assembly, interacts with the small Tim proteins.

Its subcellular location is the mitochondrion intermembrane space. It localises to the mitochondrion membrane. In terms of biological role, required for the assembly or recycling of the small Tim proteins in the mitochondrial intermembrane, thereby participating in the import and insertion of multi-pass transmembrane proteins into the mitochondrial inner membrane. This Kluyveromyces lactis (strain ATCC 8585 / CBS 2359 / DSM 70799 / NBRC 1267 / NRRL Y-1140 / WM37) (Yeast) protein is Helper of Tim protein 13 (HOT13).